A 286-amino-acid polypeptide reads, in one-letter code: MAETGDRSVEVVELDSLRVRLRIRGYPVVFVNAIRRTVLSDVPTMAVDYAYIFDNTTAVYDEMVAHRLGLVVLDSNEAVEKYRRPEECAGKEPSEEDCFVEVSLEAEVDAEGETGRYITAGDLSISDPQVKPVYPETPLIYVAPGQRIHVQAFARLGRGKEHTKWSPASLSVLRYTPILIYDSSKAGDECLECLSAYPQVVEALKSGGKGSLVLEGLRRTSGLRYCAETACRGAVEVRYDSSNLDLEVESTGALRPEKIVELAIRELEEKVKRFAEAVESVGVEES.

The protein belongs to the archaeal Rpo3/eukaryotic RPB3 RNA polymerase subunit family. As to quaternary structure, part of the RNA polymerase complex.

The protein localises to the cytoplasm. It catalyses the reaction RNA(n) + a ribonucleoside 5'-triphosphate = RNA(n+1) + diphosphate. Its function is as follows. DNA-dependent RNA polymerase (RNAP) catalyzes the transcription of DNA into RNA using the four ribonucleoside triphosphates as substrates. In Aeropyrum pernix (strain ATCC 700893 / DSM 11879 / JCM 9820 / NBRC 100138 / K1), this protein is DNA-directed RNA polymerase subunit Rpo3.